Reading from the N-terminus, the 539-residue chain is Heparanase-like protein 2 (539 aa).

A signal peptide spans 1–21; sequence MGFNVVVFLSCLLLLPPVTFG. Residues Asn-143, Asn-163, and Asn-181 are each glycosylated (N-linked (GlcNAc...) asparagine). The active-site Proton donor is Glu-198. N-linked (GlcNAc...) asparagine glycosylation occurs at Asn-300. The active-site Nucleophile is Glu-316. Residue Asn-421 is glycosylated (N-linked (GlcNAc...) asparagine).

Belongs to the glycosyl hydrolase 79 family.

It is found in the lysosome membrane. Its subcellular location is the secreted. In terms of biological role, endoglycosidase which is a cell surface and extracellular matrix-degrading enzyme. Cleaves heparan sulfate proteoglycans (HSPGs) into heparan sulfate side chains and core proteoglycans. This Arabidopsis thaliana (Mouse-ear cress) protein is Heparanase-like protein 2.